Reading from the N-terminus, the 528-residue chain is Glucose transporter 1E (528 aa).

Positions 1–22 (MTERRDNVSHAPDAIEGPNDGA) are disordered. Residues 1 to 43 (MTERRDNVSHAPDAIEGPNDGAHAEETSPGFFSFENLGVAQVQ) are Cytoplasmic-facing. A helical membrane pass occupies residues 44–64 (VVGGTLNGYVIGYVAVYLLLY). Residues 65-118 (LTATECKFTTEGACGGRKIYGCKWSGTTCKFENPKCSEGSDPSDSCKNEVAYTS) lie on the Extracellular side of the membrane. A helical transmembrane segment spans residues 119–139 (VYSGIFACAMIVGSMVGSIIA). The Cytoplasmic portion of the chain corresponds to 140–151 (GKCITTFGLKKS). The chain crosses the membrane as a helical span at residues 152-172 (FIIVSITCTIACVVVQVAIEY). The Extracellular portion of the chain corresponds to 173–175 (NNY). A helical membrane pass occupies residues 176–196 (YALCTGRVLIGLGVGILCSVF). Over 197–213 (PMYVNENAHPKLCKMDG) the chain is Cytoplasmic. Residues 214 to 234 (VLFQVFTTLGIMLAAMLGLIL) form a helical membrane-spanning segment. The Extracellular segment spans residues 235–250 (DKTGASKEEANMAGRL). Residues 251 to 271 (HVFSAVPLGLSVAMFLVGMFL) form a helical membrane-spanning segment. At 272 to 301 (RESTATFAQDDDGKADGGMDPNEYGWGQML) the chain is on the cytoplasmic side. A helical membrane pass occupies residues 302–322 (WPLFMGAVTAGTLQLTGINAV). Topologically, residues 323–338 (MNYAPKITENLGMDPS) are extracellular. Residues 339-359 (LGNFLVMAWNFVTSLVAIPLA) form a helical membrane-spanning segment. The Cytoplasmic segment spans residues 360–367 (SRFTMRQM). Residues 368 to 388 (FITCSFVASCMCLFLCGIPVF) form a helical membrane-spanning segment. The Extracellular portion of the chain corresponds to 389–403 (PGVAEEKVKNGVATT). Residues 404–424 (GIALFIAAFEFGVGSCFFVLA) form a helical membrane-spanning segment. Residues 425–438 (QDLFPPSFRPKGSS) are Cytoplasmic-facing. A helical membrane pass occupies residues 439-459 (FVVMMQFIFNILINLLYPITT). At 460–475 (EAISGGATGDQDKGQA) the chain is on the extracellular side. Residues 476–496 (VVFILFGLIGLICFVLQFFYL) form a helical membrane-spanning segment. Residues 497-528 (YPYDANQDHENDHGTEPVERILSPVDVPTPRN) lie on the Cytoplasmic side of the membrane. The tract at residues 507 to 528 (NDHGTEPVERILSPVDVPTPRN) is disordered.

It belongs to the major facilitator superfamily. Sugar transporter (TC 2.A.1.1) family.

The protein localises to the membrane. In terms of biological role, facilitative glucose transporter. The polypeptide is Glucose transporter 1E (THT1E) (Trypanosoma brucei brucei).